We begin with the raw amino-acid sequence, 1128 residues long: Apoptosis-stimulating of p53 protein 2 (1128 aa).

Disordered regions lie at residues 86 to 106 (PGRDIVSGPRSQDPSLKRNGV) and 322 to 341 (KENLPVSSDGNLPQQAASAP). The span at 322-339 (KENLPVSSDGNLPQQAAS) shows a compositional bias: polar residues. Residues 332 to 348 (NLPQQAASAPSRVAAVG) are interaction with APPBP1. Position 480 is a phosphoserine (S480). Disordered stretches follow at residues 494–598 (NVAK…LPPF) and 655–706 (NQQQ…LPFL). Residues 528–537 (GSSQQLSTVV) show a composition bias toward polar residues. Phosphoserine occurs at positions 556, 569, 572, and 576. Residues 558–575 (SIPSVGQDQTLSPGSKQE) show a composition bias toward polar residues. Polar residues predominate over residues 655–670 (NQQQHPENIYSNSQGK). Residues S698, S714, and S737 each carry the phosphoserine modification. Disordered stretches follow at residues 724 to 748 (KLSNAPRPLKKRSSITEPEGPNGPN) and 802 to 909 (SLVP…TNLR). A compositionally biased stretch (low complexity) spans 840 to 849 (NSPNLQNNPE). The SH3-binding motif lies at 866–875 (YPPYPPPPYP). Over residues 867–876 (PPYPPPPYPS) the composition is skewed to pro residues. Residues 876 to 1128 (SGEPEGPGED…RIKPRQRSLA (253 aa)) form a mediates interaction with APC2 region. ANK repeat units lie at residues 926–957 (PLALLLDSSLEGEFDLVQRIIYEVDDPSLPND), 958–990 (EGITALHNAVCAGHTEIVKFLVQFGVNVNAADS), 991–1024 (DGWTPLHCAASCNNVQVCKFLVESGAAVFAMTYS), and 1025–1067 (DMQT…ALWD). An SH3 domain is found at 1057–1119 (MNKGVIYALW…PRNLLGLYPR (63 aa)).

Belongs to the ASPP family. As to quaternary structure, interacts with P53/TP53; the interaction promotes pro-apoptotic activity. Interacts with BCL2. Interacts with protein phosphatase 1. Interacts with RELA NF-kappa-B subunit. This interaction probably prevents the activation of apoptosis, possibly by preventing its interaction with TP53. Interacts with APC2 and NAE1. Interacts with DDX42 (via the C-terminus); the interaction is not inhibited by TP53BP2 ubiquitination and is independent of p53/TP53. Widely expressed. Expressed in spleen, thymus, prostate, testis, ovary, small intestine, colon and peripheral blood leukocyte. Reduced expression in breast carcinomas expressing a wild-type TP53 protein. Overexpressed in lung cancer cell lines.

It is found in the cytoplasm. The protein localises to the perinuclear region. The protein resides in the nucleus. Its function is as follows. Regulator that plays a central role in regulation of apoptosis and cell growth via its interactions with proteins such as TP53. Regulates TP53 by enhancing the DNA binding and transactivation function of TP53 on the promoters of proapoptotic genes in vivo. Inhibits the ability of NAE1 to conjugate NEDD8 to CUL1, and thereby decreases NAE1 ability to induce apoptosis. Impedes cell cycle progression at G2/M. Its apoptosis-stimulating activity is inhibited by its interaction with DDX42. This Homo sapiens (Human) protein is Apoptosis-stimulating of p53 protein 2 (TP53BP2).